The chain runs to 127 residues: 3-aminoacrylate deaminase RutC (127 aa).

It belongs to the RutC family.

The catalysed reaction is (Z)-3-aminoacrylate + H2O + H(+) = 3-oxopropanoate + NH4(+). Its function is as follows. Involved in pyrimidine catabolism. Catalyzes the deamination of 3-aminoacrylate to malonic semialdehyde, a reaction that can also occur spontaneously. RutC may facilitate the reaction and modulate the metabolic fitness, rather than catalyzing essential functions. In Pseudomonas syringae pv. syringae (strain B728a), this protein is 3-aminoacrylate deaminase RutC.